A 60-amino-acid chain; its full sequence is Large ribosomal subunit protein uL30 (60 aa).

The protein belongs to the universal ribosomal protein uL30 family. Part of the 50S ribosomal subunit.

This is Large ribosomal subunit protein uL30 from Alcanivorax borkumensis (strain ATCC 700651 / DSM 11573 / NCIMB 13689 / SK2).